A 443-amino-acid chain; its full sequence is 3-phosphoshikimate 1-carboxyvinyltransferase (443 aa).

K24, S25, and R29 together coordinate 3-phosphoshikimate. K24 is a binding site for phosphoenolpyruvate. Positions 95 and 123 each coordinate phosphoenolpyruvate. 3-phosphoshikimate is bound by residues S167, Q169, D323, and K350. A phosphoenolpyruvate-binding site is contributed by Q169. The Proton acceptor role is filled by D323. R354 and R398 together coordinate phosphoenolpyruvate.

Belongs to the EPSP synthase family. Monomer.

The protein localises to the cytoplasm. It catalyses the reaction 3-phosphoshikimate + phosphoenolpyruvate = 5-O-(1-carboxyvinyl)-3-phosphoshikimate + phosphate. Its pathway is metabolic intermediate biosynthesis; chorismate biosynthesis; chorismate from D-erythrose 4-phosphate and phosphoenolpyruvate: step 6/7. Catalyzes the transfer of the enolpyruvyl moiety of phosphoenolpyruvate (PEP) to the 5-hydroxyl of shikimate-3-phosphate (S3P) to produce enolpyruvyl shikimate-3-phosphate and inorganic phosphate. The sequence is that of 3-phosphoshikimate 1-carboxyvinyltransferase from Caulobacter vibrioides (strain ATCC 19089 / CIP 103742 / CB 15) (Caulobacter crescentus).